Here is a 333-residue protein sequence, read N- to C-terminus: Transcription initiation factor IIB (333 aa).

A TFIIB-type zinc finger spans residues 33–64; sequence EIYRCPICGNDRFVYNYERGEVVCIVCGAVVQ. The Zn(2+) site is built by Cys-37, Cys-40, Cys-56, and Cys-59. Tandem repeats lie at residues 149-232 and 243-324.

Belongs to the TFIIB family.

Stabilizes TBP binding to an archaeal box-A promoter. Also responsible for recruiting RNA polymerase II to the pre-initiation complex (DNA-TBP-TFIIB). This is Transcription initiation factor IIB from Pyrobaculum arsenaticum (strain DSM 13514 / JCM 11321 / PZ6).